We begin with the raw amino-acid sequence, 95 residues long: Co-chaperonin GroES (95 aa).

It belongs to the GroES chaperonin family. In terms of assembly, heptamer of 7 subunits arranged in a ring. Interacts with the chaperonin GroEL.

Its subcellular location is the cytoplasm. In terms of biological role, together with the chaperonin GroEL, plays an essential role in assisting protein folding. The GroEL-GroES system forms a nano-cage that allows encapsulation of the non-native substrate proteins and provides a physical environment optimized to promote and accelerate protein folding. GroES binds to the apical surface of the GroEL ring, thereby capping the opening of the GroEL channel. This is Co-chaperonin GroES from Xylella fastidiosa (strain M12).